A 1231-amino-acid chain; its full sequence is RNA-binding protein 33 (1231 aa).

Residues 1–13 (MAAALGAGGGAGA) are compositionally biased toward gly residues. Disordered regions lie at residues 1-168 (MAAA…EEEQ) and 219-261 (SQVA…FKTE). A2 is subject to N-acetylalanine. Residues 20 to 36 (QFDKPGAERSWRRRAAD) are compositionally biased toward basic and acidic residues. A compositionally biased stretch (acidic residues) spans 37–49 (EDWDSELEDDLLG). S41 carries the phosphoserine modification. The span at 82 to 108 (FSSQGVTISLNTTSGIVTSFELSDNTN) shows a compositional bias: polar residues. Acidic residues-rich tracts occupy residues 112–124 (GEQE…GDDE) and 153–168 (LTED…EEEQ). Over residues 224 to 240 (ETHEGGMETLELQKDIK) the composition is skewed to basic and acidic residues. Acidic residues predominate over residues 241 to 252 (EESDEEDDDDEE). Phosphoserine is present on residues S243 and S271. 2 disordered regions span residues 297–436 (FEER…KNIH) and 452–761 (PLLP…NLRE). Residues 305-316 (KQGRYGSRRGGR) show a composition bias toward basic residues. Basic and acidic residues predominate over residues 327 to 344 (GDQRRDNSERGRMKEHRP). The segment covering 360–379 (LIPPPQPQPPPPPPPPPPQQ) has biased composition (pro residues). Over residues 380-398 (QPIRSLFQQQQLQPLLPLQ) the composition is skewed to low complexity. Residues 469 to 483 (FPGPPEFPQHTPGPV) are compositionally biased toward pro residues. R520 is modified (asymmetric dimethylarginine). Composition is skewed to pro residues over residues 531–540 (SPPPPPPPPT), 604–618 (FIPP…PGQP), 632–647 (LHPP…PQPQ), and 661–682 (PLQP…PPQH). Composition is skewed to polar residues over residues 713 to 728 (QTAQ…QCTP) and 736 to 759 (AASQ…NSNL). A phosphoserine mark is found at S792 and S816. Disordered regions lie at residues 796–840 (RAVV…ETRL), 876–932 (ERLA…FPGA), and 998–1080 (ETPH…MRQQ). Over residues 820-829 (QPKEEAKPEA) the composition is skewed to basic and acidic residues. Residues 840–891 (LYRLKIEEQKRLREEILKQKELRRQQQAGARKKELLERLAQQQQQQQQQQHQ) adopt a coiled-coil conformation. The span at 880–901 (QQQQQQQQQQHQPQQQQQQPQQ) shows a compositional bias: low complexity. Phosphoserine is present on residues S1002 and S1010. A Glycyl lysine isopeptide (Lys-Gly) (interchain with G-Cter in SUMO2) cross-link involves residue K1019. 2 positions are modified to phosphoserine: S1032 and S1051.

Associates with the NXF1-NXT1 RNA export complex. Interacts with ALKBH5; facilitating ALKBH5 recruitment to m6A-containing transcripts. Interacts with SENP1; promoting ALKBH5 deSUMOylation and subsequent activation.

Its subcellular location is the nucleus. The protein resides in the cytoplasm. RNA reader protein, which recognizes and binds specific RNAs, thereby regulating RNA metabolic processes, such as mRNA export, mRNA stability and/or translation. Binds a subset of intronless RNAs containing GC-rich elements, such as NORAD, and promotes their nuclear export by recruiting target RNAs to components of the NXF1-NXT1 RNA export machinery. Specifically recognizes and binds N6-methyladenosine (m6A)-containing mRNAs, promoting their demethylation by ALKBH5. Acts as an molecular adapter, which (1) promotes ALKBH5 recruitment to m6A-containing transcripts and (2) activates ALKBH5 demethylase activity by recruiting SENP1, leading to ALKBH5 deSUMOylation and subsequent activation. This is RNA-binding protein 33 from Mus musculus (Mouse).